The primary structure comprises 390 residues: MMILWIMGKAYLSKEIRDVCINFDRRIKEIKSICKPDIALPKGTLILPGAIDLHTHIRGLKLAYKEDVVSGTSEASYGGITLIGDMPNSVPFVNTMETITAKLREFEYYSRVDYFVYSGVTKDLKKVDKFPIAGYKIFPEDLEKEETLEVLKSMKLKILHPEVPLALRGNRKLRLNIWYEIGALYYVKGYQNVHITHATNIRTVRLAKELGFTVDITPHHLLVDREKECLTKVNPPIRDTNERLWLLQAINEVDTVVSDHAPHASFEKQQPYEICPPGIAALSFTVPFILTLVSKGIISIDRAVELISTNPARILNIPYGEIKENNYANFTIIQFKDWRYSTKYSKVIETPLDGFPLRASIYMTIIQGKVGSLEGEVFPVKGINPFGENK.

2 residues coordinate Zn(2+): histidine 54 and histidine 56. Substrate is bound by residues 56–58 and asparagine 88; that span reads HIR. Residues lysine 136, histidine 160, histidine 197, and aspartate 259 each contribute to the Zn(2+) site. Lysine 136 is subject to N6-carboxylysine. Aspartate 259 is an active-site residue. Residues histidine 263 and 277–278 contribute to the substrate site; that span reads PG.

Belongs to the metallo-dependent hydrolases superfamily. DHOase family. Class I DHOase subfamily. It depends on Zn(2+) as a cofactor.

It carries out the reaction (S)-dihydroorotate + H2O = N-carbamoyl-L-aspartate + H(+). Its pathway is pyrimidine metabolism; UMP biosynthesis via de novo pathway; (S)-dihydroorotate from bicarbonate: step 3/3. Catalyzes the reversible cyclization of carbamoyl aspartate to dihydroorotate. The protein is Dihydroorotase of Saccharolobus solfataricus (strain ATCC 35092 / DSM 1617 / JCM 11322 / P2) (Sulfolobus solfataricus).